The following is a 195-amino-acid chain: uncharacterized protein (195 aa).

The chain crosses the membrane as a helical span at residues 175–195; it reads ILGKISGFFGSIVSTIFSLFG.

Its subcellular location is the membrane. This is an uncharacterized protein from Methanocaldococcus jannaschii (strain ATCC 43067 / DSM 2661 / JAL-1 / JCM 10045 / NBRC 100440) (Methanococcus jannaschii).